The primary structure comprises 508 residues: Dihydroniloticin synthase CYP71CD4 (508 aa).

A helical membrane pass occupies residues 6–26 (LDFFSVTSFIIFFLFLFRLVW). Cys449 contacts heme.

It belongs to the cytochrome P450 family. It depends on heme as a cofactor. As to expression, mainly expressed in roots and, to a lesser extent, in stems.

It is found in the membrane. The catalysed reaction is tirucalla-7,24-dien-3beta-ol + 2 reduced [NADPH--hemoprotein reductase] + 2 O2 = dihydroniloticin + 2 oxidized [NADPH--hemoprotein reductase] + 2 H2O + 2 H(+). It participates in secondary metabolite biosynthesis; terpenoid biosynthesis. In terms of biological role, monooxygenase involved in the biosynthesis of quassinoids triterpene natural products such as ailanthone, chaparrinone, glaucarubinone and amarolide, allelopathic degraded triterpene lactones inhibiting the growth of other plants, and possessing antimalarial, antifeedant, insecticidal, anti-inflammatory and anticancer activities. Catalyzes the conversion of tirucalladienol to dihydroniloticin. The chain is Dihydroniloticin synthase CYP71CD4 from Ailanthus altissima (Tree-of-heaven).